We begin with the raw amino-acid sequence, 245 residues long: 1-(5-phosphoribosyl)-5-[(5-phosphoribosylamino)methylideneamino] imidazole-4-carboxamide isomerase (245 aa).

Aspartate 11 (proton acceptor) is an active-site residue. Aspartate 132 functions as the Proton donor in the catalytic mechanism.

This sequence belongs to the HisA/HisF family.

Its subcellular location is the cytoplasm. The catalysed reaction is 1-(5-phospho-beta-D-ribosyl)-5-[(5-phospho-beta-D-ribosylamino)methylideneamino]imidazole-4-carboxamide = 5-[(5-phospho-1-deoxy-D-ribulos-1-ylimino)methylamino]-1-(5-phospho-beta-D-ribosyl)imidazole-4-carboxamide. It functions in the pathway amino-acid biosynthesis; L-histidine biosynthesis; L-histidine from 5-phospho-alpha-D-ribose 1-diphosphate: step 4/9. The protein is 1-(5-phosphoribosyl)-5-[(5-phosphoribosylamino)methylideneamino] imidazole-4-carboxamide isomerase of Geobacillus kaustophilus (strain HTA426).